Reading from the N-terminus, the 317-residue chain is Glucokinase (317 aa).

Residue 6 to 12 participates in ATP binding; the sequence is GVDIGGT.

This sequence belongs to the ROK (NagC/XylR) family. Homooligomer (possibly a homotetramer). Alternatively, it may form a heterotetramer of two glucokinase subunits with two ORF2 (AC P40182) proteins.

Its subcellular location is the cytoplasm. The catalysed reaction is D-glucose + ATP = D-glucose 6-phosphate + ADP + H(+). In terms of biological role, a probable glucose kinase. Required for glucose repression of many different genes, restores glucose kinase activity in E.coli glk mutants. In Streptomyces coelicolor (strain ATCC BAA-471 / A3(2) / M145), this protein is Glucokinase (glkA).